Consider the following 264-residue polypeptide: MKPYLDLMRHVLEHGTRKDDRTGTGTLSVFGWQTRYDLAAGFPLVTTKKCHLRSIVHELLWFLQGDTNIRYLKENGVSIWDEWADENGDLGPVYGHQWRSWPKADGGVIDQIAEAVKTLRTNPDSRRIIVSAWNVADLDRMALAPCHAFFQFYVAEGRLSCQLYQRSADIFLGVPFNIASYALLTLMMAQVTGLKPGDFVHTLGDAHLYVNHLEQAREQLSREPRPLPTMTLNPDVTDIFGFRFEDFTLGGYDPHPAIKAPVAV.

Arg21 is a dUMP binding site. Residue His51 coordinates (6R)-5,10-methylene-5,6,7,8-tetrahydrofolate. A dUMP-binding site is contributed by 126 to 127 (RR). The active-site Nucleophile is Cys146. DUMP is bound by residues 166–169 (RSAD), Asn177, and 207–209 (HLY). Asp169 is a binding site for (6R)-5,10-methylene-5,6,7,8-tetrahydrofolate. Ala263 contributes to the (6R)-5,10-methylene-5,6,7,8-tetrahydrofolate binding site.

It belongs to the thymidylate synthase family. Bacterial-type ThyA subfamily. As to quaternary structure, homodimer.

It is found in the cytoplasm. It catalyses the reaction dUMP + (6R)-5,10-methylene-5,6,7,8-tetrahydrofolate = 7,8-dihydrofolate + dTMP. It participates in pyrimidine metabolism; dTTP biosynthesis. Its function is as follows. Catalyzes the reductive methylation of 2'-deoxyuridine-5'-monophosphate (dUMP) to 2'-deoxythymidine-5'-monophosphate (dTMP) while utilizing 5,10-methylenetetrahydrofolate (mTHF) as the methyl donor and reductant in the reaction, yielding dihydrofolate (DHF) as a by-product. This enzymatic reaction provides an intracellular de novo source of dTMP, an essential precursor for DNA biosynthesis. In Thiobacillus denitrificans (strain ATCC 25259 / T1), this protein is Thymidylate synthase.